The chain runs to 62 residues: DNA-binding protein 7 (62 aa).

Belongs to the 7 kDa DNA-binding/endoribonuclease P2 family. Monomer.

It localises to the cytoplasm. Its function is as follows. Can constrain negative DNA supercoils. May be involved in maintaining the integrity of the genome at high temperature. The polypeptide is DNA-binding protein 7 (Metallosphaera sedula (strain ATCC 51363 / DSM 5348 / JCM 9185 / NBRC 15509 / TH2)).